A 434-amino-acid chain; its full sequence is MSNFSPREIVSELDRFIIGQKDAKRAVAIALRNRWRRQQLEGQMREEVMPKNILMIGPTGVGKTEISRRLAKLAGAPFVKVEATKFTEVGYVGRDVEQIIRDLVEIAITLVREKRREDVKAKAHLNAEERVLDALVGKTASPVTRDSFRKKLRNGEMDDKEIEIEVSDSGASPNFEIPGMPGANIGVLNISDMLGKAMGGRTKTRKTTVKDSYPILINDESDKLLDQDQIVQEALRVSEDEGIVFIDEIDKIAAREGGSGAGVSREGVQRDLLPLVEGTTVATKYGPVKTDHILFITSGAFHVSKPSDLLPELQGRLPIRVELSALTREDFRRILTETEASLIKQYIALMETEEVKLEFSDDAIDALADIAVDLNATVENIGARRLQTVMEKVLDEISFTAPDKAGATFIIDAAYVKEKIGGLAKNTDLSRFIL.

ATP is bound by residues Ile18, 60-65 (GVGKTE), Asp247, Glu312, and Arg384.

Belongs to the ClpX chaperone family. HslU subfamily. As to quaternary structure, a double ring-shaped homohexamer of HslV is capped on each side by a ring-shaped HslU homohexamer. The assembly of the HslU/HslV complex is dependent on binding of ATP.

It is found in the cytoplasm. Its function is as follows. ATPase subunit of a proteasome-like degradation complex; this subunit has chaperone activity. The binding of ATP and its subsequent hydrolysis by HslU are essential for unfolding of protein substrates subsequently hydrolyzed by HslV. HslU recognizes the N-terminal part of its protein substrates and unfolds these before they are guided to HslV for hydrolysis. The protein is ATP-dependent protease ATPase subunit HslU of Brucella melitensis biotype 1 (strain ATCC 23456 / CCUG 17765 / NCTC 10094 / 16M).